We begin with the raw amino-acid sequence, 349 residues long: Protein AMBP (349 aa).

The N-terminal stretch at 1–19 (MQGLGALFLLLTACLTLKA) is a signal peptide. Residues Cys52 and Lys110 each coordinate 3-hydroxy-L-kynurenine. The cysteines at positions 90 and 187 are disulfide-linked. N-linked (GlcNAc...) asparagine glycosylation is present at Asn114. 3-hydroxy-L-kynurenine is bound by residues Lys136 and Lys148. Residue Ser214 is glycosylated (O-linked (Xyl...) (chondroitin sulfate) serine). Disulfide bonds link Cys230–Cys280, Cys239–Cys263, Cys255–Cys276, Cys286–Cys336, Cys295–Cys319, and Cys311–Cys332. BPTI/Kunitz inhibitor domains follow at residues 230–280 (CQLN…LQTC) and 286–336 (CNLP…KEYC). The N-linked (GlcNAc...) asparagine glycan is linked to Asn233.

In the N-terminal section; belongs to the calycin superfamily. Lipocalin family. As to quaternary structure, monomer. Homodimer. In plasma, it occurs as a monomer or dimer and in covalently-linked complexes with immunoglobulin A (IgA), ALB/albumin and F2/prothrombin. Chromophore-bound alpha-1-microglobulin interacts with the constant region of immunoglobulin A. Chromophore-bound alpha-1-microglobulin interacts with ALB with molar ratio 2:1 and 1:1; this interaction does not prevent fatty acid binding to ALB. Interacts with F2/prothrombin (via N-terminus) with molar ratio 2:1 and 1:1; this interaction does not prevent the activation of prothrombin to thrombin. Interacts with NDUFAB1, a subunit of mitochondrial complex I. Interacts with FN1. I-alpha-I plasma protease inhibitors are assembled from one or two heavy chains (HC) and one light chain, bikunin. Inter-alpha-inhibitor (I-alpha-I) is composed of ITIH1/HC1, ITIH2/HC2 and bikunin, and pre-alpha-inhibitor (P-alpha-I) of ITIH3/HC3 and bikunin. Interacts with TNFAIP6 (via Link domain). In terms of assembly, monomer. Also occurs as a complex with tryptase in mast cells. In terms of processing, the precursor is proteolytically processed into separately functioning proteins. 3-hydroxykynurenine, an oxidized tryptophan metabolite that is common in biological fluids, reacts with Cys-53, Lys-111, Lys-137, and Lys-149 to form heterogeneous polycyclic chromophores including hydroxanthommatin. The reaction by alpha-1-microglobulin is autocatalytic; the human protein forms chromophore even when expressed in insect and bacterial cells. The chromophore can react with accessible cysteines forming non-reducible thioether cross-links with other molecules of alpha-1-microglobulin or with other proteins such as Ig alpha-1 chain C region 'Cys-352'. Post-translationally, heavy chains are interlinked with bikunin via a chondroitin 4-sulfate bridge to the C-terminal aspartate. In terms of processing, proteolytically cleaved by PRSS3 at Kunitz domain 2. Expressed by the liver and secreted in plasma.

The protein resides in the secreted. It localises to the endoplasmic reticulum. Its subcellular location is the cytoplasm. The protein localises to the cytosol. It is found in the cell membrane. The protein resides in the nucleus membrane. It localises to the mitochondrion inner membrane. Its subcellular location is the extracellular space. The protein localises to the extracellular matrix. Antioxidant and tissue repair protein with reductase, heme-binding and radical-scavenging activities. Removes and protects against harmful oxidants and repairs macromolecules in intravascular and extravascular spaces and in intracellular compartments. Intravascularly, plays a regulatory role in red cell homeostasis by preventing heme- and reactive oxygen species-induced cell damage. Binds and degrades free heme to protect fetal and adult red blood cells from hemolysis. Reduces extracellular methemoglobin, a Fe3+ (ferric) form of hemoglobin that cannot bind oxygen, back to the Fe2+ (ferrous) form deoxyhemoglobin, which has oxygen-carrying potential. Upon acute inflammation, inhibits oxidation of low-density lipoprotein particles by MPO and limits vascular damage. Extravascularly, protects from oxidation products formed on extracellular matrix structures and cell membranes. Catalyzes the reduction of carbonyl groups on oxidized collagen fibers and preserves cellular and extracellular matrix ultrastructures. Importantly, counteracts the oxidative damage at blood-placenta interface, preventing leakage of free fetal hemoglobin into the maternal circulation. Intracellularly, has a role in maintaining mitochondrial redox homeostasis. Bound to complex I of the respiratory chain of mitochondria, may scavenge free radicals and preserve mitochondrial ATP synthesis. Protects renal tubule epithelial cells from heme-induced oxidative damage to mitochondria. Reduces cytochrome c from Fe3+ (ferric) to the Fe2+ (ferrous) state through formation of superoxide anion radicals in the presence of ascorbate or NADH/NADPH electron donor cofactors, ascorbate being the preferred cofactor. Has a chaperone role in facilitating the correct folding of bikunin in the endoplasmic reticulum compartment. In terms of biological role, kunitz-type serine protease inhibitor and structural component of extracellular matrix with a role in extracellular space remodeling and cell adhesion. Among others, has antiprotease activity toward kallikrein, a protease involved in airway inflammation; inhibits GZMK/granzyme, a granule-stored serine protease involved in NK and T cell cytotoxic responses; and inhibits PLG/plasmin, a protease required for activation of matrix metalloproteinases. As part of I-alpha-I complex, provides for the heavy chains to be transferred from I-alpha-I complex to hyaluronan in the presence of TNFAIP6, in a dynamic process that releases free bikunin and remodels extracellular matrix proteoglycan structures. Free bikunin, but not its heavy chain-bound form, acts as a potent protease inhibitor in airway secretions. Part of hyaluronan-rich extracellular matrix that surrounds oocyte during cumulus oophorus expansion, an indispensable process for proper ovulation. Also inhibits calcium oxalate crystallization. Functionally, kunitz-type serine protease inhibitor. Has high catalytic efficiency for F10/blood coagulation factor Xa and may act as an anticoagulant by inhibiting prothrombin activation. Inhibits trypsin and mast cell CMA1/chymase and tryptase proteases. The protein is Protein AMBP (Ambp) of Rattus norvegicus (Rat).